Here is a 500-residue protein sequence, read N- to C-terminus: Cytochrome P450 71D13 (500 aa).

Residues 3-23 form a helical; Signal-anchor for type II membrane protein membrane-spanning segment; that stretch reads LQISSAIIILVVTYTISLLII. Heme is bound at residue Cys-439.

The protein belongs to the cytochrome P450 family. Requires heme as cofactor.

The protein resides in the endoplasmic reticulum membrane. The enzyme catalyses (4S)-limonene + reduced [NADPH--hemoprotein reductase] + O2 = (1S,6R)-isopiperitenol + oxidized [NADPH--hemoprotein reductase] + H2O + H(+). Hydroxylates (-)-(4S)-limonene to (-)-trans-isopiperitenol, a precursor of (-)-menthol, responsible for the cooling sensation of peppermint. The polypeptide is Cytochrome P450 71D13 (CYP71D13) (Mentha piperita (Peppermint)).